A 358-amino-acid chain; its full sequence is Alanine racemase (358 aa).

Lys34 (proton acceptor; specific for D-alanine) is an active-site residue. Lys34 carries the N6-(pyridoxal phosphate)lysine modification. Arg129 is a binding site for substrate. The active-site Proton acceptor; specific for L-alanine is the Tyr254. A substrate-binding site is contributed by Met302.

It belongs to the alanine racemase family. It depends on pyridoxal 5'-phosphate as a cofactor.

It catalyses the reaction L-alanine = D-alanine. The protein operates within amino-acid biosynthesis; D-alanine biosynthesis; D-alanine from L-alanine: step 1/1. Functionally, catalyzes the interconversion of L-alanine and D-alanine. May also act on other amino acids. The protein is Alanine racemase (alr) of Vibrio parahaemolyticus serotype O3:K6 (strain RIMD 2210633).